The sequence spans 262 residues: Small ribosomal subunit protein eS1 (262 aa).

A compositionally biased stretch (basic and acidic residues) spans 234–251 (DPKEDSGKNVKSLPESKE). Residues 234-262 (DPKEDSGKNVKSLPESKEATNILTAELKH) are disordered.

The protein belongs to the eukaryotic ribosomal protein eS1 family. Component of the small ribosomal subunit. Mature ribosomes consist of a small (40S) and a large (60S) subunit. The 40S subunit contains about 33 different proteins and 1 molecule of RNA (18S). The 60S subunit contains about 49 different proteins and 3 molecules of RNA (25S, 5.8S and 5S).

It is found in the cytoplasm. The polypeptide is Small ribosomal subunit protein eS1 (Plasmodium yoelii yoelii).